The following is a 365-amino-acid chain: MEKYELLKDIGSGNFGVARLMRNRETKELVAMKYIPRGLKIDENVAREIINHRSLRHPNIIRFKEVVLTPTHLAIVMEYAAGGELFDRICSAGRFSEDESRYFFQQLICGVSYCHFMQICHRDLKLENTLLDGSPAPRLKICDFGYSKSSLLHSKPKSTVGTPAYIAPEVLSRREYDGKMADVWSCGVTLYVMLVGAYPFEDPDDPKNFRKTIGRIVSIQYKIPEYVHISQDCRQLLSRIFVANPAKRITIREIRNHPWFMKNLPRELTEAAQAKYYKKDNSARTFSDQTVDEIMKIVQEAKTPPPSSTPVAGFGWTEEEEQEDGKNPDDDEGDRDEEEGEEGDSEDEYTKQVKQAHASCDLQKS.

In terms of domain architecture, Protein kinase spans 4-260; sequence YELLKDIGSG…IREIRNHPWF (257 aa). ATP-binding positions include 10-18 and K33; that span reads IGSGNFGVA. D123 functions as the Proton acceptor in the catalytic mechanism. The tract at residues 298-365 is disordered; that stretch reads VQEAKTPPPS…AHASCDLQKS (68 aa). Over residues 317 to 347 the composition is skewed to acidic residues; the sequence is TEEEEQEDGKNPDDDEGDRDEEEGEEGDSED.

This sequence belongs to the protein kinase superfamily. Ser/Thr protein kinase family. Interacts with BZIP46. Post-translationally, may be phosphorylated. In terms of tissue distribution, expressed in leaf blades and leaf sheaths. Expressed in shoots and roots of young seedlings.

The catalysed reaction is L-seryl-[protein] + ATP = O-phospho-L-seryl-[protein] + ADP + H(+). It carries out the reaction L-threonyl-[protein] + ATP = O-phospho-L-threonyl-[protein] + ADP + H(+). Its activity is regulated as follows. Activated by hyperosmotic stress. May play a role in signal transduction of hyperosmotic response. Can phosphorylate ABI5 in vitro. Can phosphorylate BZIP46 in vitro. This is Serine/threonine-protein kinase SAPK6 from Oryza sativa subsp. japonica (Rice).